A 688-amino-acid chain; its full sequence is Methionine--tRNA ligase (688 aa).

A 'HIGH' region motif is present at residues P20 to H30. The Zn(2+) site is built by C151, C154, C164, and C167. A 'KMSKS' region motif is present at residues K337 to S341. K340 lines the ATP pocket. A tRNA-binding domain is found at T587 to M688.

Belongs to the class-I aminoacyl-tRNA synthetase family. MetG type 1 subfamily. As to quaternary structure, homodimer. Requires Zn(2+) as cofactor.

It localises to the cytoplasm. It catalyses the reaction tRNA(Met) + L-methionine + ATP = L-methionyl-tRNA(Met) + AMP + diphosphate. Is required not only for elongation of protein synthesis but also for the initiation of all mRNA translation through initiator tRNA(fMet) aminoacylation. The chain is Methionine--tRNA ligase from Vibrio parahaemolyticus serotype O3:K6 (strain RIMD 2210633).